We begin with the raw amino-acid sequence, 201 residues long: Recombination protein RecR (201 aa).

The C4-type zinc-finger motif lies at 60–75 (CSCCGNVDTSDPCTIC). In terms of domain architecture, Toprim spans 83 to 178 (ATLIVVEDVS…RVTRLAHGVP (96 aa)).

This sequence belongs to the RecR family.

Functionally, may play a role in DNA repair. It seems to be involved in an RecBC-independent recombinational process of DNA repair. It may act with RecF and RecO. This is Recombination protein RecR from Brucella melitensis biotype 2 (strain ATCC 23457).